The primary structure comprises 1520 residues: Accessory colonization factor AcfD (1520 aa).

The first 16 residues, 1-16 (MKIRIVSLIVLGFLIG), serve as a signal peptide directing secretion. Cys17 carries the N-palmitoyl cysteine lipid modification. Cys17 carries S-diacylglycerol cysteine lipidation. The region spanning 1085–1388 (GNRQPTGQWA…MFAQLKEWAE (304 aa)) is the Peptidase M60 domain.

Its subcellular location is the cell membrane. This chain is Accessory colonization factor AcfD (acfD), found in Vibrio cholerae serotype O1 (strain ATCC 39315 / El Tor Inaba N16961).